Here is a 451-residue protein sequence, read N- to C-terminus: Phosphoglucosamine mutase (451 aa).

The Phosphoserine intermediate role is filled by Ser107. Mg(2+)-binding residues include Ser107, Asp246, Asp248, and Asp250. Ser107 carries the post-translational modification Phosphoserine.

Belongs to the phosphohexose mutase family. Requires Mg(2+) as cofactor. Activated by phosphorylation.

The enzyme catalyses alpha-D-glucosamine 1-phosphate = D-glucosamine 6-phosphate. Functionally, catalyzes the conversion of glucosamine-6-phosphate to glucosamine-1-phosphate. The protein is Phosphoglucosamine mutase of Burkholderia cenocepacia (strain ATCC BAA-245 / DSM 16553 / LMG 16656 / NCTC 13227 / J2315 / CF5610) (Burkholderia cepacia (strain J2315)).